A 396-amino-acid chain; its full sequence is Pre-mycofactocin synthase (396 aa).

One can recognise an FMN hydroxy acid dehydrogenase domain in the interval 1–383 (MAEAWFETVA…SPADILVPTG (383 aa)). FMN contacts are provided by serine 108, glutamine 128, threonine 156, and lysine 254. Residue histidine 278 is the Proton acceptor of the active site. FMN-binding positions include 309–313 (DGGIR) and 332–333 (GR).

It belongs to the FMN-dependent alpha-hydroxy acid dehydrogenase family. The cofactor is FMN.

It carries out the reaction 3-amino-5-[(4-hydroxyphenyl)methyl]-4,4-dimethyl-2-pyrrolidin-2-one + O2 + H2O = pre-mycofactocin + H2O2 + NH4(+). Its function is as follows. Involved in the biosynthesis of the enzyme cofactor mycofactocin (MFT). Catalyzes the oxidative deamination of AHDP (3-amino-5-[(4-hydroxyphenyl)methyl]-4,4-dimethyl-2-pyrrolidin-2-one), forming an alpha-keto amide moiety on the resulting molecule, which is called pre-mycofactocin (PMFT). This reaction occurs via a 5-[(4-hydroxyphenyl)methyl]-3-imino-4,4-dimethylpyrrolidin-2-one intermediate, which converts to PMFT. The alpha-keto amide moiety is the redox-active center for the redox activity of mycofactocin. The chain is Pre-mycofactocin synthase (mftD) from Mycobacterium tuberculosis (strain CDC 1551 / Oshkosh).